The following is a 269-amino-acid chain: MSIFQAIILGAVQGLAEFLPISSSGHLAIVEYFFKQEDLPILFDILLHVATLAAVCTVFAKRIAGLFSVLGRFIIRKSKPEDKDDLMMIAAIIVATAVTGVIGLLLKDWVKTIDIRLIPIFFIITGLLLIASSKIKHNKQAKNVTLLTAAITGLAQGIGVIPGISRSGSTISASLFAGLDREKAGEFSFLLSIPAILAAFILEIKSADNLLAGVSPISLISGMISAFVVGYFSLRFLLKLIKNGKLMYFAFYLIPLGLGLSIYFWGFAG.

Helical transmembrane passes span 1–21 (MSIFQAIILGAVQGLAEFLPI), 39–59 (LPILFDILLHVATLAAVCTVF), 86–106 (LMMIAAIIVATAVTGVIGLLL), 112–132 (TIDIRLIPIFFIITGLLLIAS), 144–164 (VTLLTAAITGLAQGIGVIPGI), 184–204 (AGEFSFLLSIPAILAAFILEI), 210–230 (LLAGVSPISLISGMISAFVVG), and 249–269 (FAFYLIPLGLGLSIYFWGFAG).

This sequence belongs to the UppP family.

The protein resides in the cell inner membrane. It catalyses the reaction di-trans,octa-cis-undecaprenyl diphosphate + H2O = di-trans,octa-cis-undecaprenyl phosphate + phosphate + H(+). Its function is as follows. Catalyzes the dephosphorylation of undecaprenyl diphosphate (UPP). Confers resistance to bacitracin. This Treponema denticola (strain ATCC 35405 / DSM 14222 / CIP 103919 / JCM 8153 / KCTC 15104) protein is Undecaprenyl-diphosphatase.